The chain runs to 421 residues: Imidazolonepropionase (421 aa).

Fe(3+) contacts are provided by His81 and His83. Zn(2+) contacts are provided by His81 and His83. 4-imidazolone-5-propanoate is bound by residues Arg90, Tyr153, and His186. An N-formimidoyl-L-glutamate-binding site is contributed by Tyr153. Residue His251 coordinates Fe(3+). His251 lines the Zn(2+) pocket. Residue Glu254 participates in 4-imidazolone-5-propanoate binding. Position 326 (Asp326) interacts with Fe(3+). A Zn(2+)-binding site is contributed by Asp326. Asn328 and Gly330 together coordinate N-formimidoyl-L-glutamate. Residue Ser331 participates in 4-imidazolone-5-propanoate binding.

The protein belongs to the metallo-dependent hydrolases superfamily. HutI family. Zn(2+) is required as a cofactor. The cofactor is Fe(3+).

It localises to the cytoplasm. It catalyses the reaction 4-imidazolone-5-propanoate + H2O = N-formimidoyl-L-glutamate. The protein operates within amino-acid degradation; L-histidine degradation into L-glutamate; N-formimidoyl-L-glutamate from L-histidine: step 3/3. Its function is as follows. Catalyzes the hydrolytic cleavage of the carbon-nitrogen bond in imidazolone-5-propanoate to yield N-formimidoyl-L-glutamate. It is the third step in the universal histidine degradation pathway. This Streptococcus pyogenes serotype M1 protein is Imidazolonepropionase.